We begin with the raw amino-acid sequence, 180 residues long: Nucleoside triphosphate/diphosphate phosphatase (180 aa).

The Proton donor role is filled by Arg-26. Positions 90, 106, 108, 110, 123, and 126 each coordinate Mg(2+).

It belongs to the Ntdp family. Mg(2+) serves as cofactor.

The enzyme catalyses a ribonucleoside 5'-triphosphate + H2O = a ribonucleoside 5'-diphosphate + phosphate + H(+). It catalyses the reaction a ribonucleoside 5'-diphosphate + H2O = a ribonucleoside 5'-phosphate + phosphate + H(+). Has nucleoside phosphatase activity towards nucleoside triphosphates and nucleoside diphosphates. The sequence is that of Nucleoside triphosphate/diphosphate phosphatase from Staphylococcus aureus (strain MSSA476).